Here is a 394-residue protein sequence, read N- to C-terminus: MKPFISLASLIVLIASASAGGDDDYGKYGYGSYGPGIGGIGGGGGGIVIGGGGGGIGGGIGGGIGGGIGGGGLIGGGGLIGGFGPGSVSGSVNQFGGVRTRAFGLGGTSPAVRGAAQGAATLSALGVASGRPSRVSGVSVGTGGGRALVSGSATPIGGYGIGIPYGVYGGGYGGYGGGYGGYGLGYGGYGGGYGGYGYGGYGYGPDLATFQGHTFGNLATGSINSLTGGYQIPYGGILSLYGPYGGYGGGYGGYGGGYGGYGGGYGIGIGSGGLGYGGYGYGGYGLGGSTLTGVSQSGPFGTASMYGQAYGAGVPLFGTTYFGGVNVGSPYGIYGGGYPIGGIGGGAGPIGGGGIVIGGGVGGIGGGGIGGIGGGGIGGGGIIGGGPIIRKKKY.

The N-terminal stretch at 1 to 19 (MKPFISLASLIVLIASASA) is a signal peptide.

In terms of tissue distribution, prismatic layer of shell (at protein level). Expressed primarily in the mantle with highest level in the mantle edge and lower level in the mantle pallium.

It localises to the secreted. The protein is Shematrin-like protein 2 of Pinctada maxima (Silver-lipped pearl oyster).